Reading from the N-terminus, the 37-residue chain is Large ribosomal subunit protein bL36c (37 aa).

This sequence belongs to the bacterial ribosomal protein bL36 family.

It localises to the plastid. Its subcellular location is the chloroplast. This is Large ribosomal subunit protein bL36c from Pleurastrum terricola (Filamentous green alga).